The following is a 1437-amino-acid chain: IQ domain-containing protein N (1437 aa).

Residues 84 to 112 (SRAATVIQASWKGYRLRQKLISQMTAAKA) form the IQ 1 domain. 3 disordered regions span residues 332-353 (TSPT…SLSN), 416-440 (SQAQ…KPSP), and 848-878 (STGS…QNPR). Residues 422–440 (TVSTSSKTSPSSPTVKPSP) show a composition bias toward low complexity. A compositionally biased stretch (polar residues) spans 861–878 (AQPQLHSHAPNKTMQNPR). 5 consecutive IQ domains span residues 1190 to 1216 (QAVV…QWAT), 1217 to 1239 (IIQA…RATT), 1240 to 1258 (IIQA…ARQV), 1361 to 1389 (QHRA…SAAK), and 1390 to 1413 (MVQA…LGTG).

As to quaternary structure, interacts with calmodulin. Expressed in testis, in elongating spermatids (at protein level).

Essential for spermiogenesis and fertilization. May be required for manchette assembly in elongating spermatids. This is IQ domain-containing protein N (Iqcn) from Mus musculus (Mouse).